The chain runs to 119 residues: Toxin ICK-9 (119 aa).

An N-terminal signal peptide occupies residues 1 to 19 (MMKLYSLVIIATLAAAAFA). 4 cysteine pairs are disulfide-bonded: C59–C74, C67–C80, C71–C116, and C73–C87.

This sequence belongs to the neurotoxin 25 family. ICK-8 subfamily. Expressed by the venom gland.

It is found in the secreted. Ion channel inhibitor. This Trittame loki (Brush-footed trapdoor spider) protein is Toxin ICK-9.